The sequence spans 268 residues: Undecaprenyl-diphosphatase (268 aa).

Helical transmembrane passes span 5 to 25 (SIIS…IPVS), 43 to 63 (GNTF…LVYF), 84 to 104 (LSVL…HGFI), 109 to 129 (FETP…LYVI), 184 to 204 (AAEF…ALDL), 213 to 233 (IDDI…GIFV), and 248 to 268 (PFAI…WLLG).

This sequence belongs to the UppP family.

Its subcellular location is the cell inner membrane. It carries out the reaction di-trans,octa-cis-undecaprenyl diphosphate + H2O = di-trans,octa-cis-undecaprenyl phosphate + phosphate + H(+). In terms of biological role, catalyzes the dephosphorylation of undecaprenyl diphosphate (UPP). Confers resistance to bacitracin. The protein is Undecaprenyl-diphosphatase of Sinorhizobium medicae (strain WSM419) (Ensifer medicae).